The sequence spans 478 residues: Zinc finger and SCAN domain-containing protein 26 (478 aa).

K17 participates in a covalent cross-link: Glycyl lysine isopeptide (Lys-Gly) (interchain with G-Cter in SUMO2). An SCAN box domain is found at C51–L133. 2 disordered regions span residues G159–E181 and E200–K226. 2 stretches are compositionally biased toward basic and acidic residues: residues Q164–E181 and E207–K226. The C2H2-type 1; degenerate zinc-finger motif lies at Y231–H253. C2H2-type zinc fingers lie at residues H282–H304, Y310–H332, Y338–H360, C366–H388, H394–H416, F422–H444, and Y450–H472.

Its subcellular location is the nucleus. Functionally, may be involved in transcriptional regulation. In Homo sapiens (Human), this protein is Zinc finger and SCAN domain-containing protein 26 (ZSCAN26).